We begin with the raw amino-acid sequence, 294 residues long: Nucleotide-binding protein Tfu_2020 (294 aa).

18–25 (GMSGAGRS) is a binding site for ATP. GTP is bound at residue 69-72 (DVRS).

The protein belongs to the RapZ-like family.

Displays ATPase and GTPase activities. The protein is Nucleotide-binding protein Tfu_2020 of Thermobifida fusca (strain YX).